The sequence spans 824 residues: A-adding tRNA nucleotidyltransferase (824 aa).

2 CBS domains span residues Met305 to Ile363 and Val367 to Leu423. ATP is bound at residue Gly459–Arg462. Residues Asp472 and Asp474 each coordinate Mg(2+). Residues Arg545 to Asp546, Asn550, Asp590 to Arg599, Arg603, and Arg632 each bind ATP.

The protein belongs to the tRNA nucleotidyltransferase/poly(A) polymerase family. The cofactor is Mg(2+).

The enzyme catalyses a tRNA with a 3' CC end + ATP = a tRNA with a 3' CCA end + diphosphate. In terms of biological role, tRNA nucleotidyltransferase involved in the synthesis of the tRNA CCA terminus. Adds the terminal adenosine residue to tRNA. Can incorporate CMP into tRNA ending with C74C75 (tRNACC), with very weak efficiency. The polypeptide is A-adding tRNA nucleotidyltransferase (Aquifex aeolicus (strain VF5)).